We begin with the raw amino-acid sequence, 243 residues long: DNA repair protein RecO (243 aa).

This sequence belongs to the RecO family.

Its function is as follows. Involved in DNA repair and RecF pathway recombination. In Vibrio vulnificus (strain CMCP6), this protein is DNA repair protein RecO.